We begin with the raw amino-acid sequence, 149 residues long: UPF0102 protein Bpro_0391 (149 aa).

The interval 1–30 is disordered; that stretch reads MWFSRKQVVKPPPDGSRAQPGQVTTKSRGD.

Belongs to the UPF0102 family.

The protein is UPF0102 protein Bpro_0391 of Polaromonas sp. (strain JS666 / ATCC BAA-500).